A 358-amino-acid polypeptide reads, in one-letter code: WD repeat-containing protein 53 (358 aa).

WD repeat units lie at residues 1 to 38 (MAVK…AWGE), 43 to 80 (LGHT…VLDV), 85 to 123 (DSLD…ILDL), 127 to 166 (KVIR…LWSL), 173 to 225 (WITN…RIFR), and 232 to 270 (EQEL…LWDA). The disordered stretch occupies residues 273–311 (EVEKKQKSPTKRTHRKKPKRGTCTKQGGNTNASVTDEEE). Positions 279-294 (KSPTKRTHRKKPKRGT) are enriched in basic residues. Residues 295 to 306 (CTKQGGNTNASV) are compositionally biased toward polar residues. Residues 314–355 (NILPKLNIEHGEKVNWLLGTKIKGHQNILVADQTSCISVYPL) form a WD 7 repeat.

This sequence belongs to the WD repeat WDR53 family.

This chain is WD repeat-containing protein 53 (WDR53), found in Homo sapiens (Human).